The sequence spans 417 residues: MSRRYLFTSESVTEGHPDKICDQISDAILDAVLAADPSSRVAAEVVTNTGLVLITGELTTQANVNFIQVARQKIKEIGYTNADNGFSANSCSVMVALDEQSPDIAQGVTSAQEQRDKLSDDQLDEIGAGDQGLMFGYACNETPEFMPLPISLAHRLSLKLSQVRKSGELPYLGPDGKTQVTVIYEDGKPVGIDTILISTQHTETIGALTDNTEIQAKIKADLLEKVIKPVFVGATVGLSDSTKFLVNPTGKFVIGGPQGDSGLTGRKIIIDTYGGYSRHGGGAFSGKDPTKVDRSASYACRYVAKNIVAAGLAEKCEVQVSYAIGVARPVSVMIETFGTCTVDEDRLLEVVQKHFELRPAGIIQAFDLRNLPSQRNGRFYQDMAAYGHFGRTDLDLPWERLDKVDILKQELATATVA.

His16 contacts ATP. A Mg(2+)-binding site is contributed by Asp18. Residue Glu44 coordinates K(+). The L-methionine site is built by Glu57 and Gln100. Residues 100-110 (QSPDIAQGVTS) form a flexible loop region. ATP is bound by residues 175–177 (DGK), 251–252 (KF), Asp260, 266–267 (RK), Ala283, and Lys287. L-methionine is bound at residue Asp260. Residue Lys291 participates in L-methionine binding.

Belongs to the AdoMet synthase family. As to quaternary structure, homotetramer; dimer of dimers. Mg(2+) serves as cofactor. It depends on K(+) as a cofactor.

The protein resides in the cytoplasm. The catalysed reaction is L-methionine + ATP + H2O = S-adenosyl-L-methionine + phosphate + diphosphate. It functions in the pathway amino-acid biosynthesis; S-adenosyl-L-methionine biosynthesis; S-adenosyl-L-methionine from L-methionine: step 1/1. Catalyzes the formation of S-adenosylmethionine (AdoMet) from methionine and ATP. The overall synthetic reaction is composed of two sequential steps, AdoMet formation and the subsequent tripolyphosphate hydrolysis which occurs prior to release of AdoMet from the enzyme. In Picosynechococcus sp. (strain ATCC 27264 / PCC 7002 / PR-6) (Agmenellum quadruplicatum), this protein is S-adenosylmethionine synthase.